Here is a 68-residue protein sequence, read N- to C-terminus: U-poneritoxin(01)-Om4b (68 aa).

The N-terminal stretch at 1–25 (MKPSGLTLAFLVVFMMAIMYNSVQA) is a signal peptide. Residues 26–39 (EALADADAEAFAEA) constitute a propeptide that is removed on maturation.

This sequence belongs to the formicidae venom precursor-01 superfamily. In terms of assembly, homo- or heterodimer with PLP4 (AC A0A348G5W0); disulfide-linked. In terms of processing, truncated sequences of this peptide have also been found in the venom. It is possible they have been cleaved in the venom. As to expression, expressed by the venom gland.

It localises to the secreted. Its function is as follows. This homodimer composed of two cationic amphipathic alpha-helical peptides has antimicrobial activities against E.coli, S.aureus (MIC=3.1 uM), and S.cerevisiae (MIC=3.1 uM). It also shows histamine-releasing activity (66.4% at 10 uM) and a weak hemolytic activity (10.5% at 50 uM). This chain is U-poneritoxin(01)-Om4b, found in Odontomachus monticola (Trap-jaw ant).